We begin with the raw amino-acid sequence, 168 residues long: Fusion protein P6 (168 aa).

The next 4 helical transmembrane spans lie at 29 to 49 (IWPL…AGFF), 52 to 72 (AGFT…TPTL), 94 to 114 (FQSL…ALIA), and 143 to 163 (ALPG…LWPS).

In terms of assembly, interacts with P3.

Its subcellular location is the virion membrane. Functionally, mediates the fusion with the host outer membrane during virus entry into the host cell. This chain is Fusion protein P6 (P6), found in Pseudomonas savastanoi pv. phaseolicola (Pseudomonas syringae pv. phaseolicola).